A 397-amino-acid chain; its full sequence is 8-amino-7-oxononanoate synthase (397 aa).

Substrate is bound at residue arginine 21. 110-111 (GY) is a pyridoxal 5'-phosphate binding site. Residue histidine 135 participates in substrate binding. The pyridoxal 5'-phosphate site is built by serine 181, histidine 209, and threonine 238. Lysine 241 is modified (N6-(pyridoxal phosphate)lysine). Threonine 355 provides a ligand contact to substrate.

The protein belongs to the class-II pyridoxal-phosphate-dependent aminotransferase family. BioF subfamily. In terms of assembly, homodimer. The cofactor is pyridoxal 5'-phosphate.

The catalysed reaction is 6-carboxyhexanoyl-[ACP] + L-alanine + H(+) = (8S)-8-amino-7-oxononanoate + holo-[ACP] + CO2. It functions in the pathway cofactor biosynthesis; biotin biosynthesis. In terms of biological role, catalyzes the decarboxylative condensation of pimeloyl-[acyl-carrier protein] and L-alanine to produce 8-amino-7-oxononanoate (AON), [acyl-carrier protein], and carbon dioxide. The sequence is that of 8-amino-7-oxononanoate synthase from Saccharophagus degradans (strain 2-40 / ATCC 43961 / DSM 17024).